The chain runs to 266 residues: 3-methyl-2-oxobutanoate hydroxymethyltransferase (266 aa).

Mg(2+) is bound by residues aspartate 43 and aspartate 82. Residues aspartate 43–serine 44, aspartate 82, and lysine 110 contribute to the 3-methyl-2-oxobutanoate site. A Mg(2+)-binding site is contributed by glutamate 112. The Proton acceptor role is filled by glutamate 179.

Belongs to the PanB family. In terms of assembly, homodecamer; pentamer of dimers. Mg(2+) serves as cofactor.

It localises to the cytoplasm. It carries out the reaction 3-methyl-2-oxobutanoate + (6R)-5,10-methylene-5,6,7,8-tetrahydrofolate + H2O = 2-dehydropantoate + (6S)-5,6,7,8-tetrahydrofolate. It participates in cofactor biosynthesis; (R)-pantothenate biosynthesis; (R)-pantoate from 3-methyl-2-oxobutanoate: step 1/2. In terms of biological role, catalyzes the reversible reaction in which hydroxymethyl group from 5,10-methylenetetrahydrofolate is transferred onto alpha-ketoisovalerate to form ketopantoate. The polypeptide is 3-methyl-2-oxobutanoate hydroxymethyltransferase (Psychrobacter cryohalolentis (strain ATCC BAA-1226 / DSM 17306 / VKM B-2378 / K5)).